We begin with the raw amino-acid sequence, 185 residues long: Ribosome-recycling factor (185 aa).

Belongs to the RRF family.

The protein resides in the cytoplasm. Functionally, responsible for the release of ribosomes from messenger RNA at the termination of protein biosynthesis. May increase the efficiency of translation by recycling ribosomes from one round of translation to another. The chain is Ribosome-recycling factor from Rhodospirillum centenum (strain ATCC 51521 / SW).